A 457-amino-acid chain; its full sequence is Phosphomethylpyrimidine synthase (457 aa).

Substrate is bound by residues asparagine 80, methionine 109, tyrosine 139, histidine 175, 195-197 (SRG), 236-239 (DSLR), and glutamate 275. Residue histidine 279 participates in Zn(2+) binding. Position 302 (tyrosine 302) interacts with substrate. Histidine 343 is a binding site for Zn(2+). Cysteine 423, cysteine 426, and cysteine 431 together coordinate [4Fe-4S] cluster.

The protein belongs to the ThiC family. Requires [4Fe-4S] cluster as cofactor.

It carries out the reaction 5-amino-1-(5-phospho-beta-D-ribosyl)imidazole + S-adenosyl-L-methionine = 4-amino-2-methyl-5-(phosphooxymethyl)pyrimidine + CO + 5'-deoxyadenosine + formate + L-methionine + 3 H(+). Its pathway is cofactor biosynthesis; thiamine diphosphate biosynthesis. In terms of biological role, catalyzes the synthesis of the hydroxymethylpyrimidine phosphate (HMP-P) moiety of thiamine from aminoimidazole ribotide (AIR) in a radical S-adenosyl-L-methionine (SAM)-dependent reaction. The polypeptide is Phosphomethylpyrimidine synthase (Nostoc sp. (strain PCC 7120 / SAG 25.82 / UTEX 2576)).